The sequence spans 316 residues: WSCD family member GA21586 (316 aa).

Residues 8–28 (FFGVSATIIIYIGGVLFLSMN) form a helical membrane-spanning segment. N-linked (GlcNAc...) asparagine glycosylation is found at N78, N150, N226, and N232.

This sequence belongs to the WSCD family.

Its subcellular location is the membrane. In Drosophila pseudoobscura pseudoobscura (Fruit fly), this protein is WSCD family member GA21586.